Reading from the N-terminus, the 156-residue chain is 6,7-dimethyl-8-ribityllumazine synthase (156 aa).

Residues phenylalanine 23, 57 to 59 (AYE), and 81 to 83 (AII) each bind 5-amino-6-(D-ribitylamino)uracil. 86-87 (GT) contacts (2S)-2-hydroxy-3-oxobutyl phosphate. The Proton donor role is filled by histidine 89. Phenylalanine 114 serves as a coordination point for 5-amino-6-(D-ribitylamino)uracil. Residue arginine 128 coordinates (2S)-2-hydroxy-3-oxobutyl phosphate.

The protein belongs to the DMRL synthase family.

The enzyme catalyses (2S)-2-hydroxy-3-oxobutyl phosphate + 5-amino-6-(D-ribitylamino)uracil = 6,7-dimethyl-8-(1-D-ribityl)lumazine + phosphate + 2 H2O + H(+). It functions in the pathway cofactor biosynthesis; riboflavin biosynthesis; riboflavin from 2-hydroxy-3-oxobutyl phosphate and 5-amino-6-(D-ribitylamino)uracil: step 1/2. Functionally, catalyzes the formation of 6,7-dimethyl-8-ribityllumazine by condensation of 5-amino-6-(D-ribitylamino)uracil with 3,4-dihydroxy-2-butanone 4-phosphate. This is the penultimate step in the biosynthesis of riboflavin. This is 6,7-dimethyl-8-ribityllumazine synthase from Helicobacter acinonychis (strain Sheeba).